The following is a 404-amino-acid chain: Putative gustatory receptor 94a (404 aa).

Residues 1–11 are Cytoplasmic-facing; the sequence is MDFTSDYAHRR. The helical transmembrane segment at 12 to 32 threads the bilayer; sequence MVKFLTIILIGFMTVFGLLAN. The Extracellular segment spans residues 33-43; that stretch reads RYRAGRRERFR. A helical transmembrane segment spans residues 44-64; that stretch reads FSKANLAFASLWAIAFSLVYG. The Cytoplasmic portion of the chain corresponds to 65–133; it reads RQIYKEYQEG…RLDSRSLYIS (69 aa). Residues 134–154 form a helical membrane-spanning segment; sequence IVLALVKTVAFPLTIEVAFIL. Over 155–171 the chain is Extracellular; the sequence is QQRRQHPEMSLIWTLYR. A helical transmembrane segment spans residues 172–192; that stretch reads LFPLIISNFLNNCYFGAMVVV. Residues 193-260 lie on the Cytoplasmic side of the membrane; the sequence is KEILYALNRR…HSGKYLTPMS (68 aa). Residues 261–281 traverse the membrane as a helical segment; the sequence is LSMILSLICHLLGITVGFYSL. Over 282 to 296 the chain is Extracellular; it reads YYAIADTLIMGKPYD. The helical transmembrane segment at 297–317 threads the bilayer; sequence GLGSLINLVFLSISLAEITLL. The Cytoplasmic segment spans residues 318-376; the sequence is THLCNHLLVATRRSAVILQEMNLQHADSRYRQAVHGFTLLVTVTKYQIKPLGLYELDMR. The helical transmembrane segment at 377–397 threads the bilayer; that stretch reads LISNVFSAVASFLLILVQADL. Topologically, residues 398 to 404 are extracellular; that stretch reads SQRFKMQ.

It belongs to the insect chemoreceptor superfamily. Gustatory receptor (GR) family. Gr22e subfamily. In terms of tissue distribution, in larvae, is expressed in neurons of the terminal external chemosensory organ.

Its subcellular location is the cell membrane. Its function is as follows. Probable gustatory receptor which mediates acceptance or avoidance behavior, depending on its substrates. The protein is Putative gustatory receptor 94a (Gr94a) of Drosophila melanogaster (Fruit fly).